A 126-amino-acid polypeptide reads, in one-letter code: MAILGLGTDIVEIARIEAVIARSGERLARRVLSDNEWAIWKTHHQPVRFLAKRFAVKEAAAKAFGTGIRNGLAFNQFEVFNDELGKPRLRLWGEALKLAEKLGVVNMHVTLADERHYACATVIIES.

2 residues coordinate Mg(2+): D9 and E58.

It belongs to the P-Pant transferase superfamily. AcpS family. The cofactor is Mg(2+).

The protein localises to the cytoplasm. The enzyme catalyses apo-[ACP] + CoA = holo-[ACP] + adenosine 3',5'-bisphosphate + H(+). Its function is as follows. Transfers the 4'-phosphopantetheine moiety from coenzyme A to a Ser of acyl-carrier-protein. In Escherichia coli O139:H28 (strain E24377A / ETEC), this protein is Holo-[acyl-carrier-protein] synthase.